The chain runs to 436 residues: Arginine biosynthesis bifunctional protein ArgJ, mitochondrial (436 aa).

Substrate-binding residues include T172, K198, T209, E298, N431, and S436. The active-site Nucleophile is the T209.

The protein belongs to the ArgJ family. As to quaternary structure, heterodimer of an alpha and a beta chain. In terms of processing, the alpha and beta chains are autoproteolytically processed from a single precursor protein within the mitochondrion.

Its subcellular location is the mitochondrion matrix. It carries out the reaction N(2)-acetyl-L-ornithine + L-glutamate = N-acetyl-L-glutamate + L-ornithine. It catalyses the reaction L-glutamate + acetyl-CoA = N-acetyl-L-glutamate + CoA + H(+). Its pathway is amino-acid biosynthesis; L-arginine biosynthesis; L-ornithine and N-acetyl-L-glutamate from L-glutamate and N(2)-acetyl-L-ornithine (cyclic): step 1/1. The protein operates within amino-acid biosynthesis; L-arginine biosynthesis; N(2)-acetyl-L-ornithine from L-glutamate: step 1/4. Catalyzes two activities which are involved in the cyclic version of arginine biosynthesis: the synthesis of acetylglutamate from glutamate and acetyl-CoA, and of ornithine by transacetylation between acetylornithine and glutamate. In Meyerozyma guilliermondii (strain ATCC 6260 / CBS 566 / DSM 6381 / JCM 1539 / NBRC 10279 / NRRL Y-324) (Yeast), this protein is Arginine biosynthesis bifunctional protein ArgJ, mitochondrial.